Here is a 740-residue protein sequence, read N- to C-terminus: MSQPVENLDEVLKNHKLSKEEYEDILRILDGRHPNIVEIGIFSAMWSEHCSYKSSKKYLNGFPTKAPWVIQGPGENAGVIDIGDGMAAVFKMESHNHPSFIEPFQGAATGVGGILRDIFTMGARPVANLNALRFGRVRGDSDINKYQRHLVRGVVDGIGSYGNCMGVPTIGGEVSFDESYNGNILVNAFSLGLVKSDEIFLGVASGIGNPVMYVGSKTGRDGLGGAVMSSDSFTEESKSLRPTVQVGDPFTEKLLLEACLELFKTDAIIGIQDMGAAGLTSSAFEMAGKTGAGLIMHLDKVPAREEGMTPYDFMLSESQERMLICAKKGREQEIIDIFEKWELDVAVIGEVTDTERMELFWYGDKVCDMPIAPVSEEAPILDRPVARPAYLNEVIAKTVDDYAKVDDQEAYEKLLAPLEVVDKAWVYNQYDSMVQTNTTKHPGSLDASCIRIKENGRALAMSSDCNPRYCYIDPKGGAALAVVESGRNVAMSGARPLSITDCLNYGNPENPEVMWQFAQGCEGIKEACLELNTPVVSGNVSLYNETNGVSVFPTPAIAMVGLNDDQNKVLPSVFQHEGNNIVLIGETKGEFGGSLYIKELFGETVGTLPSFDYKTELKLWELVIEANKIGLLESAKDVNVGGIAIALSKMAAVSSKGITVKASVSNSRDIFDESQSRALLEVADADLEELLDMAAGLGLKAEVIGKIGGEEVKVNDVALPLEKVKDVYFNTFKRTIEQDL.

His49 is a catalytic residue. ATP is bound by residues Tyr52 and Lys91. Glu93 provides a ligand contact to Mg(2+). Substrate-binding positions include 94–97 and Arg116; that span reads SHNH. Catalysis depends on His95, which acts as the Proton acceptor. Asp117 is a binding site for Mg(2+). A substrate-binding site is contributed by Gln245. Asp273 is a binding site for Mg(2+). A substrate-binding site is contributed by 317–319; the sequence is ESQ. 2 residues coordinate ATP: Asp501 and Gly538. Residue Asn539 coordinates Mg(2+). Position 541 (Ser541) interacts with substrate.

The protein belongs to the FGAMS family. As to quaternary structure, monomer. Part of the FGAM synthase complex composed of 1 PurL, 1 PurQ and 2 PurS subunits.

It is found in the cytoplasm. The enzyme catalyses N(2)-formyl-N(1)-(5-phospho-beta-D-ribosyl)glycinamide + L-glutamine + ATP + H2O = 2-formamido-N(1)-(5-O-phospho-beta-D-ribosyl)acetamidine + L-glutamate + ADP + phosphate + H(+). It functions in the pathway purine metabolism; IMP biosynthesis via de novo pathway; 5-amino-1-(5-phospho-D-ribosyl)imidazole from N(2)-formyl-N(1)-(5-phospho-D-ribosyl)glycinamide: step 1/2. Part of the phosphoribosylformylglycinamidine synthase complex involved in the purines biosynthetic pathway. Catalyzes the ATP-dependent conversion of formylglycinamide ribonucleotide (FGAR) and glutamine to yield formylglycinamidine ribonucleotide (FGAM) and glutamate. The FGAM synthase complex is composed of three subunits. PurQ produces an ammonia molecule by converting glutamine to glutamate. PurL transfers the ammonia molecule to FGAR to form FGAM in an ATP-dependent manner. PurS interacts with PurQ and PurL and is thought to assist in the transfer of the ammonia molecule from PurQ to PurL. The polypeptide is Phosphoribosylformylglycinamidine synthase subunit PurL (Sulfurovum sp. (strain NBC37-1)).